A 200-amino-acid polypeptide reads, in one-letter code: High frequency lysogenization protein HflD homolog (200 aa).

This sequence belongs to the HflD family.

It localises to the cytoplasm. The protein resides in the cell inner membrane. In Pseudoalteromonas translucida (strain TAC 125), this protein is High frequency lysogenization protein HflD homolog.